The chain runs to 218 residues: Ribose-5-phosphate isomerase A (218 aa).

Substrate is bound by residues 28–31 (TGST), 81–84 (DGAD), and 94–97 (KGGG). The Proton acceptor role is filled by Glu-103. Substrate is bound at residue Lys-121.

The protein belongs to the ribose 5-phosphate isomerase family. Homodimer.

The catalysed reaction is aldehydo-D-ribose 5-phosphate = D-ribulose 5-phosphate. Its pathway is carbohydrate degradation; pentose phosphate pathway; D-ribose 5-phosphate from D-ribulose 5-phosphate (non-oxidative stage): step 1/1. Functionally, catalyzes the reversible conversion of ribose-5-phosphate to ribulose 5-phosphate. This Vibrio atlanticus (strain LGP32) (Vibrio splendidus (strain Mel32)) protein is Ribose-5-phosphate isomerase A.